The primary structure comprises 232 residues: Large ribosomal subunit protein uL1 (232 aa).

This sequence belongs to the universal ribosomal protein uL1 family. Part of the 50S ribosomal subunit.

Functionally, binds directly to 23S rRNA. The L1 stalk is quite mobile in the ribosome, and is involved in E site tRNA release. Protein L1 is also a translational repressor protein, it controls the translation of the L11 operon by binding to its mRNA. This Alkaliphilus oremlandii (strain OhILAs) (Clostridium oremlandii (strain OhILAs)) protein is Large ribosomal subunit protein uL1.